The primary structure comprises 466 residues: Adenosylhomocysteinase (466 aa).

The substrate site is built by Thr-57, Asp-132, and Glu-192. 193-195 is a binding site for NAD(+); the sequence is TTT. Substrate contacts are provided by Lys-222 and Asp-226. NAD(+) is bound by residues Asn-227, 256–261, Glu-279, Asn-314, 335–337, and Asn-380; these read GYGDVG and IGH.

This sequence belongs to the adenosylhomocysteinase family. It depends on NAD(+) as a cofactor.

Its subcellular location is the cytoplasm. It catalyses the reaction S-adenosyl-L-homocysteine + H2O = L-homocysteine + adenosine. It participates in amino-acid biosynthesis; L-homocysteine biosynthesis; L-homocysteine from S-adenosyl-L-homocysteine: step 1/1. Its function is as follows. May play a key role in the regulation of the intracellular concentration of adenosylhomocysteine. This is Adenosylhomocysteinase from Rhizobium etli (strain CIAT 652).